Consider the following 156-residue polypeptide: Small ribosomal subunit protein uS7 (156 aa).

Belongs to the universal ribosomal protein uS7 family. Part of the 30S ribosomal subunit. Contacts proteins S9 and S11.

Functionally, one of the primary rRNA binding proteins, it binds directly to 16S rRNA where it nucleates assembly of the head domain of the 30S subunit. Is located at the subunit interface close to the decoding center, probably blocks exit of the E-site tRNA. This chain is Small ribosomal subunit protein uS7, found in Geotalea daltonii (strain DSM 22248 / JCM 15807 / FRC-32) (Geobacter daltonii).